Consider the following 735-residue polypeptide: MWRVLFLLSGLGGLWMDSNFDSLPVQITVPEKIRSIIKEEIESQVSYKIVIEGKPYTANLMQKNFLSHNFRVYSYNGTGIMKPLDQDFQNFCHYQGYIEGYPKSVAMVSTCTGLRGLLQFENVSYGIEPLESSVGFEHVIYQVKHKKADVSLYNEKDIESRDLSFKLQSIEPQKDFAKYIEMHVVVEKQLYNHMGSGTTVVTQKIFQLIGLTNAIFVSLNITVILSSLELWIDENKIATTGDAKELLHTFLRWKRSYLVLRPHDVAFLLVYREKSNYVGATFQGKMCDANYAGGVLLHPRTISLESLAVILAQLLSLSMGIPYDDINQCQCSAAVCIMNPEAIHFSGVKIFSNCSIEDFAHFISKQKSQCLHNQPRLDPFFKQQAVCGNAKLEAGEECDCGTQQNCFLLGAKCCDTATCRFKAGSNCAEGPCCENCLFMSQERVCRPSFDECDLPEYCNGTSASCPENHFIQTGHPCGPNQWVCIDGVCMNGDKQCMDTFGGEAEFGPTECYSYLNSKTDVSGNCGIGDSGYTQCEADNLQCGKLICKYAGEFLLQIPRATIIYANISGHLCVAVEFASDHEDSHKMWIKDGTSCGSNKVCKNQRCVSSSYLGYDCTTDKCNHRGVCNNKKHCHCSASYLPPDCSVQSDTSPGGSIDSGNFPLVAVPARLPERRHMENVYHSKPMRWPLFLFIPFFIIFCVLIAIMVKVHFQRKKWRTEDYSTDEQPESESEPKG.

The N-terminal stretch at 1–16 is a signal peptide; sequence MWRVLFLLSGLGGLWM. Positions 17–174 are excised as a propeptide; sequence DSNFDSLPVQ…FKLQSIEPQK (158 aa). At 17-686 the chain is on the extracellular side; that stretch reads DSNFDSLPVQ…ENVYHSKPMR (670 aa). N-linked (GlcNAc...) asparagine glycans are attached at residues asparagine 76, asparagine 122, and asparagine 220. Residues 178 to 375 enclose the Peptidase M12B domain; that stretch reads KYIEMHVVVE…QKSQCLHNQP (198 aa). Intrachain disulfides connect cysteine 287-cysteine 370, cysteine 329-cysteine 354, cysteine 331-cysteine 336, and cysteine 445-cysteine 465. N-linked (GlcNAc...) asparagine glycans are attached at residues asparagine 353, asparagine 459, and asparagine 566. Residues 384–473 enclose the Disintegrin domain; sequence QAVCGNAKLE…SCPENHFIQT (90 aa). Positions 612–645 constitute an EGF-like domain; it reads LGYDCTTDKCNHRGVCNNKKHCHCSASYLPPDCS. 3 cysteine pairs are disulfide-bonded: cysteine 616–cysteine 627, cysteine 621–cysteine 633, and cysteine 635–cysteine 644. The helical transmembrane segment at 687–707 threads the bilayer; sequence WPLFLFIPFFIIFCVLIAIMV. The Cytoplasmic portion of the chain corresponds to 708 to 735; sequence KVHFQRKKWRTEDYSTDEQPESESEPKG. Serine 729 carries the post-translational modification Phosphoserine.

In terms of assembly, heterodimer with ADAM1/fertilin subunit alpha. Post-translationally, the signal and the metalloprotease domain are cleaved during the epididymal maturation of the spermatozoa. As to expression, expressed specifically in testis.

It is found in the membrane. Sperm surface membrane protein that may be involved in sperm-egg plasma membrane adhesion and fusion during fertilization. Could have a direct role in sperm-zona binding or migration of sperm from the uterus into the oviduct. Interactions with egg membrane could be mediated via binding between its disintegrin-like domain to one or more integrins receptors on the egg. This is a non catalytic metalloprotease-like protein. The protein is Disintegrin and metalloproteinase domain-containing protein 2 (ADAM2) of Macaca fascicularis (Crab-eating macaque).